The sequence spans 229 residues: GTP-binding protein Di-Ras3 (229 aa).

Residues 44 to 51, 63 to 69, 91 to 95, 152 to 155, and 182 to 183 each bind GTP; these read GTAGVGKS, RHEYLPT, DSKSG, NKSD, and AK. The short motif at 66-74 is the Effector region element; that stretch reads YLPTIENTY. Cys-226 carries the post-translational modification Cysteine methyl ester. Residue Cys-226 is the site of S-geranylgeranyl cysteine attachment. Positions 227 to 229 are cleaved as a propeptide — removed in mature form; the sequence is IIM.

The protein belongs to the small GTPase superfamily. Di-Ras family. In terms of tissue distribution, expressed in normal ovarian and breast epithelial cells but not in ovarian and breast cancers.

The protein resides in the cell membrane. The protein is GTP-binding protein Di-Ras3 (DIRAS3) of Homo sapiens (Human).